We begin with the raw amino-acid sequence, 294 residues long: MSRIEALPTHIKAQVLAEALPWLKQLHGKVVVVKYGGNAMTDDTLRRAFAADMAFLRNCGIHPVVVHGGGPQITAMLRRLGIEGDFKGGFRVTTPEVLDVARMVLFGQVGRELVNLINAHGPYAVGITGEDAQLFTAVRRSVTVDGVATDIGLVGDVDQVNTAAMLDLVAAGRIPVVSTLAPDADGVVHNINADTAAAAVAEALGAEKLLMLTDIDGLYTRWPDRDSLVSEIDTGTLAQLLPTLESGMVPKVEACLRAVIGGVPSAHIIDGRVTHCVLVELFTDAGTGTKVVRG.

Residues 69 to 70 (GG), Arg91, and Asn190 each bind substrate.

This sequence belongs to the acetylglutamate kinase family. ArgB subfamily.

The protein localises to the cytoplasm. The catalysed reaction is N-acetyl-L-glutamate + ATP = N-acetyl-L-glutamyl 5-phosphate + ADP. It functions in the pathway amino-acid biosynthesis; L-arginine biosynthesis; N(2)-acetyl-L-ornithine from L-glutamate: step 2/4. Functionally, catalyzes the ATP-dependent phosphorylation of N-acetyl-L-glutamate. The protein is Acetylglutamate kinase of Mycobacterium bovis (strain ATCC BAA-935 / AF2122/97).